We begin with the raw amino-acid sequence, 141 residues long: ATP synthase epsilon chain (141 aa).

It belongs to the ATPase epsilon chain family. F-type ATPases have 2 components, CF(1) - the catalytic core - and CF(0) - the membrane proton channel. CF(1) has five subunits: alpha(3), beta(3), gamma(1), delta(1), epsilon(1). CF(0) has three main subunits: a, b and c.

The protein resides in the cell inner membrane. Functionally, produces ATP from ADP in the presence of a proton gradient across the membrane. This is ATP synthase epsilon chain from Methylobacillus flagellatus (strain ATCC 51484 / DSM 6875 / VKM B-1610 / KT).